The primary structure comprises 188 residues: Probable manganese efflux pump MntP (188 aa).

Helical transmembrane passes span tyrosine 3 to glycine 23, leucine 41 to alanine 61, leucine 66 to isoleucine 86, tryptophan 106 to phenylalanine 128, alanine 143 to glycine 163, and isoleucine 168 to glycine 188.

Belongs to the MntP (TC 9.B.29) family.

Its subcellular location is the cell inner membrane. Its function is as follows. Probably functions as a manganese efflux pump. This chain is Probable manganese efflux pump MntP, found in Salmonella heidelberg (strain SL476).